The following is a 323-amino-acid chain: Beta-ketoacyl-[acyl-carrier-protein] synthase III (323 aa).

Residues cysteine 114 and histidine 250 contribute to the active site. The tract at residues 251–255 is ACP-binding; the sequence is QANRR. Residue asparagine 280 is part of the active site.

It belongs to the thiolase-like superfamily. FabH family. Homodimer.

It is found in the cytoplasm. The catalysed reaction is malonyl-[ACP] + acetyl-CoA + H(+) = 3-oxobutanoyl-[ACP] + CO2 + CoA. The protein operates within lipid metabolism; fatty acid biosynthesis. Its function is as follows. Catalyzes the condensation reaction of fatty acid synthesis by the addition to an acyl acceptor of two carbons from malonyl-ACP. Catalyzes the first condensation reaction which initiates fatty acid synthesis and may therefore play a role in governing the total rate of fatty acid production. Possesses both acetoacetyl-ACP synthase and acetyl transacylase activities. Its substrate specificity determines the biosynthesis of branched-chain and/or straight-chain of fatty acids. The protein is Beta-ketoacyl-[acyl-carrier-protein] synthase III of Rhodospirillum centenum (strain ATCC 51521 / SW).